A 228-amino-acid chain; its full sequence is Cytochrome b5 domain-containing protein 1 (228 aa).

The Cytochrome b5 heme-binding domain maps to 17–83; that stretch reads RRYFTPAEVA…DPKTRDIRKH (67 aa). Positions 52 and 83 each coordinate heme.

Belongs to the cytochrome b5 family.

It localises to the cytoplasm. The protein localises to the cytoskeleton. Its subcellular location is the cilium axoneme. In terms of biological role, radial spoke stalk protein that binds heme under oxidizing conditions. Required for the coordinated beating of multiple cilia maybe by functioning in a redox signaling pathway. This Homo sapiens (Human) protein is Cytochrome b5 domain-containing protein 1.